Consider the following 344-residue polypeptide: MTEKKELILAFESSCDETSVAVIENGQRILSNVIATQIKSHQRFGGVVPEVASRHHVEQITLCTQEALEQAGVTYDDLTAVAVTYGPGLVGALLIGVTAAKAIAYAHHLPLVPVNHMAGHIYAARFVKPLEYPLLALLVSGGHTELVYMPAAGQFEIIGDTRDDAAGEAYDKIGRVLGVPYPAGKEIDRLAHLGQDTFNFPRAMLKEDNLDFSFSGLKSAFINTVHHADQIGETLDQADLAASFQASVVEVLVTKTLRAAQSLKVKQLVVAGGVAANQGLREGLAAGIESAGLDLDLIMPPLRLCGDNGAMIGAAAHIALAQNTLADLDLNAIPSLDFPYQNEL.

Fe cation is bound by residues His116 and His120. Residues 138 to 142 (LVSGG), Asp171, Gly184, Asp188, and Asn277 each bind substrate. Asp307 is a Fe cation binding site.

Belongs to the KAE1 / TsaD family. It depends on Fe(2+) as a cofactor.

The protein resides in the cytoplasm. It carries out the reaction L-threonylcarbamoyladenylate + adenosine(37) in tRNA = N(6)-L-threonylcarbamoyladenosine(37) in tRNA + AMP + H(+). Required for the formation of a threonylcarbamoyl group on adenosine at position 37 (t(6)A37) in tRNAs that read codons beginning with adenine. Is involved in the transfer of the threonylcarbamoyl moiety of threonylcarbamoyl-AMP (TC-AMP) to the N6 group of A37, together with TsaE and TsaB. TsaD likely plays a direct catalytic role in this reaction. This Latilactobacillus sakei subsp. sakei (strain 23K) (Lactobacillus sakei subsp. sakei) protein is tRNA N6-adenosine threonylcarbamoyltransferase.